Reading from the N-terminus, the 413-residue chain is Multifunctional CCA protein (413 aa).

ATP contacts are provided by glycine 8 and arginine 11. Positions 8 and 11 each coordinate CTP. Residues aspartate 21 and aspartate 23 each coordinate Mg(2+). ATP is bound by residues arginine 91, arginine 137, and arginine 140. CTP-binding residues include arginine 91, arginine 137, and arginine 140. The HD domain maps to threonine 228–tryptophan 329.

It belongs to the tRNA nucleotidyltransferase/poly(A) polymerase family. Bacterial CCA-adding enzyme type 1 subfamily. In terms of assembly, monomer. Can also form homodimers and oligomers. Mg(2+) is required as a cofactor. It depends on Ni(2+) as a cofactor.

The enzyme catalyses a tRNA precursor + 2 CTP + ATP = a tRNA with a 3' CCA end + 3 diphosphate. The catalysed reaction is a tRNA with a 3' CCA end + 2 CTP + ATP = a tRNA with a 3' CCACCA end + 3 diphosphate. Functionally, catalyzes the addition and repair of the essential 3'-terminal CCA sequence in tRNAs without using a nucleic acid template. Adds these three nucleotides in the order of C, C, and A to the tRNA nucleotide-73, using CTP and ATP as substrates and producing inorganic pyrophosphate. tRNA 3'-terminal CCA addition is required both for tRNA processing and repair. Also involved in tRNA surveillance by mediating tandem CCA addition to generate a CCACCA at the 3' terminus of unstable tRNAs. While stable tRNAs receive only 3'-terminal CCA, unstable tRNAs are marked with CCACCA and rapidly degraded. This chain is Multifunctional CCA protein, found in Salmonella choleraesuis (strain SC-B67).